We begin with the raw amino-acid sequence, 57 residues long: Phospholipase A2 superbin b (57 aa).

The Ca(2+) site is built by tyrosine 28, glycine 30, and glycine 32. Cysteine 29 and cysteine 45 are disulfide-bonded. Residue histidine 48 is part of the active site. Aspartate 49 serves as a coordination point for Ca(2+).

Ca(2+) serves as cofactor. Expressed by the venom gland.

The protein resides in the secreted. The enzyme catalyses a 1,2-diacyl-sn-glycero-3-phosphocholine + H2O = a 1-acyl-sn-glycero-3-phosphocholine + a fatty acid + H(+). In terms of biological role, snake venom phospholipase A2 (PLA2) that inhibits collagen-induced platelet aggregation. In terms of inhibition of platelet aggregation, superbin b is more potent as superbin c, and d. PLA2 catalyzes the calcium-dependent hydrolysis of the 2-acyl groups in 3-sn-phosphoglycerides. This chain is Phospholipase A2 superbin b, found in Austrelaps superbus (Lowland copperhead snake).